The chain runs to 224 residues: 7-cyano-7-deazaguanine synthase (224 aa).

ATP is bound at residue Leu-10–Val-20. Residues Cys-189, Cys-199, Cys-202, and Cys-205 each contribute to the Zn(2+) site.

It belongs to the QueC family. It depends on Zn(2+) as a cofactor.

The enzyme catalyses 7-carboxy-7-deazaguanine + NH4(+) + ATP = 7-cyano-7-deazaguanine + ADP + phosphate + H2O + H(+). It participates in purine metabolism; 7-cyano-7-deazaguanine biosynthesis. In terms of biological role, catalyzes the ATP-dependent conversion of 7-carboxy-7-deazaguanine (CDG) to 7-cyano-7-deazaguanine (preQ(0)). The protein is 7-cyano-7-deazaguanine synthase of Ectopseudomonas mendocina (strain ymp) (Pseudomonas mendocina).